The chain runs to 210 residues: Putative RING-H2 finger protein ATL50 (210 aa).

A helical membrane pass occupies residues 35 to 55; sequence IVLLYITLLSIIFFVAALIHL. The segment at 122-164 adopts an RING-type; atypical zinc-finger fold; sequence CAVCLREFTAEDELRLLPKCSHAFHVECIDTWLLTNSTCPLCR. The disordered stretch occupies residues 187–210; that stretch reads SDGDNSQDSDSSFMLTDLDDVESK.

This sequence belongs to the RING-type zinc finger family. ATL subfamily.

The protein localises to the membrane. The enzyme catalyses S-ubiquitinyl-[E2 ubiquitin-conjugating enzyme]-L-cysteine + [acceptor protein]-L-lysine = [E2 ubiquitin-conjugating enzyme]-L-cysteine + N(6)-ubiquitinyl-[acceptor protein]-L-lysine.. The protein operates within protein modification; protein ubiquitination. The polypeptide is Putative RING-H2 finger protein ATL50 (ATL50) (Arabidopsis thaliana (Mouse-ear cress)).